We begin with the raw amino-acid sequence, 634 residues long: Calcium up-regulated protein D (634 aa).

The disordered stretch occupies residues 1 to 23 (MINIEDISKSSNQSEEKQLKSTS). Ricin B-type lectin domains are found at residues 27-146 (KPKY…WTTF) and 117-250 (PGNG…WGIN).

The protein belongs to the cup family.

Its subcellular location is the cytoplasm. The protein localises to the membrane. In terms of biological role, may play an important role in stabilizing and/or regulating the cell membrane during Ca(2+) stress or certain stages of development. In Dictyostelium discoideum (Social amoeba), this protein is Calcium up-regulated protein D (cupD).